A 504-amino-acid chain; its full sequence is MDLLSALTLETWVLLAVILVLLYRLGTHRHGIFKKQGIPGPKPLPFLGTVLNYYKGLGRFDMECYKKYGKIWGLFDGQTPVFAIMDTEMIKNVLVKECFSVFTNRRDFGPVGIMGKAVSVAKDEEWKRYRALLSPTFTSGRLKEMFPIIEQYGDILVKYLKQEAETGKPVTMKKVFGAYSMDVITSTSFGVNVDSLNNPKDPFVEKTKKLLRFDFFDPLFLSVVLFPFLTPIYEMLNICMFPKDSIAFFQKFVHRIKETRLDSKHKHRVDFLQLMLNAHNNSKDEVSHKALSDVEIIAQSVIFIFAGYETTSSTLSFVLYFLATHPDIQKKLQEEIDGALPSKAPPTYDIVMEMEYLDMVLNETLRLYPIGNRLERVCKKDIELDGLFIPKGSVVTIPTYALHHDPQHWPKPEEFHPERFSKENKGSIDPYVYLPFGNGPRNCIGMRFALMNMKLALTKVLQNFSFQPCKETQIPLKLSRQAILEPEKPIVLKVLPRDAVINGA.

C443 contributes to the heme binding site.

The protein belongs to the cytochrome P450 family. Heme is required as a cofactor. As to expression, expressed in liver.

The protein resides in the endoplasmic reticulum membrane. The protein localises to the microsome membrane. It catalyses the reaction an organic molecule + reduced [NADPH--hemoprotein reductase] + O2 = an alcohol + oxidized [NADPH--hemoprotein reductase] + H2O + H(+). In terms of biological role, cytochromes P450 are a group of heme-thiolate monooxygenases. In liver microsomes, this enzyme is involved in an NADPH-dependent electron transport pathway. It oxidizes a variety of structurally unrelated compounds, including steroids, fatty acids, and xenobiotics. This Rattus norvegicus (Rat) protein is Cytochrome P450 3A2 (Cyp3a2).